The sequence spans 964 residues: Glycine dehydrogenase (decarboxylating) (964 aa).

The segment covering Met1–Thr11 has biased composition (polar residues). The disordered stretch occupies residues Met1 to Leu21. Lys713 carries the N6-(pyridoxal phosphate)lysine modification.

This sequence belongs to the GcvP family. The glycine cleavage system is composed of four proteins: P, T, L and H. Pyridoxal 5'-phosphate serves as cofactor.

The enzyme catalyses N(6)-[(R)-lipoyl]-L-lysyl-[glycine-cleavage complex H protein] + glycine + H(+) = N(6)-[(R)-S(8)-aminomethyldihydrolipoyl]-L-lysyl-[glycine-cleavage complex H protein] + CO2. The glycine cleavage system catalyzes the degradation of glycine. The P protein binds the alpha-amino group of glycine through its pyridoxal phosphate cofactor; CO(2) is released and the remaining methylamine moiety is then transferred to the lipoamide cofactor of the H protein. The polypeptide is Glycine dehydrogenase (decarboxylating) (Leptospira interrogans serogroup Icterohaemorrhagiae serovar copenhageni (strain Fiocruz L1-130)).